A 251-amino-acid chain; its full sequence is 1-(5-phosphoribosyl)-5-[(5-phosphoribosylamino)methylideneamino] imidazole-4-carboxamide isomerase (251 aa).

The active-site Proton acceptor is the Asp8. Residue Asp131 is the Proton donor of the active site.

This sequence belongs to the HisA/HisF family.

It localises to the cytoplasm. It catalyses the reaction 1-(5-phospho-beta-D-ribosyl)-5-[(5-phospho-beta-D-ribosylamino)methylideneamino]imidazole-4-carboxamide = 5-[(5-phospho-1-deoxy-D-ribulos-1-ylimino)methylamino]-1-(5-phospho-beta-D-ribosyl)imidazole-4-carboxamide. Its pathway is amino-acid biosynthesis; L-histidine biosynthesis; L-histidine from 5-phospho-alpha-D-ribose 1-diphosphate: step 4/9. This is 1-(5-phosphoribosyl)-5-[(5-phosphoribosylamino)methylideneamino] imidazole-4-carboxamide isomerase from Burkholderia lata (strain ATCC 17760 / DSM 23089 / LMG 22485 / NCIMB 9086 / R18194 / 383).